The primary structure comprises 90 residues: MAHKKAGGSTRNGRDSNPKMLGVKRFGGERVLAGNIIVRQRGTHYRPGENMGMGRDHTLYALIEGKVKFIRKGPKKRNFVSIEPLEESQP.

A disordered region spans residues M1–G22.

It belongs to the bacterial ribosomal protein bL27 family.

This Coxiella burnetii (strain Dugway 5J108-111) protein is Large ribosomal subunit protein bL27.